The chain runs to 198 residues: Glycerol-3-phosphate acyltransferase (198 aa).

Helical transmembrane passes span 2 to 22 (YAVL…AYIL), 48 to 70 (LGYK…AVLI), 75 to 97 (MGNT…PVFL), 111 to 131 (VVMT…VTVI), and 154 to 174 (IFWN…LAIF).

This sequence belongs to the PlsY family. In terms of assembly, probably interacts with PlsX.

It localises to the cell membrane. It catalyses the reaction an acyl phosphate + sn-glycerol 3-phosphate = a 1-acyl-sn-glycero-3-phosphate + phosphate. The protein operates within lipid metabolism; phospholipid metabolism. Its function is as follows. Catalyzes the transfer of an acyl group from acyl-phosphate (acyl-PO(4)) to glycerol-3-phosphate (G3P) to form lysophosphatidic acid (LPA). This enzyme utilizes acyl-phosphate as fatty acyl donor, but not acyl-CoA or acyl-ACP. The polypeptide is Glycerol-3-phosphate acyltransferase (Thermoanaerobacter pseudethanolicus (strain ATCC 33223 / 39E) (Clostridium thermohydrosulfuricum)).